The following is a 330-amino-acid chain: uncharacterized protein (330 aa).

2 disordered regions span residues 136–160 (VPPSVNEPKPKTSQTTKPPSNDESS) and 172–314 (DNEK…SQFN). The span at 223–235 (PKPPAPPPPPPVP) shows a compositional bias: pro residues. Over residues 236-246 (ISMTPAAISVT) the composition is skewed to low complexity. Composition is skewed to polar residues over residues 263–276 (AQSTLPSVSSTTDE), 284–294 (TRSSSQSNSTV), and 304–314 (PASSPTFSQFN).

This is an uncharacterized protein from Danio rerio (Zebrafish).